Reading from the N-terminus, the 202-residue chain is Probable cobalt-precorrin-6B C(15)-methyltransferase (decarboxylating) (202 aa).

S-adenosyl-L-methionine-binding positions include Thr-29, 53–57 (GCGSG), Asp-77, and Val-106.

Belongs to the methyltransferase superfamily. Archaeal-type CbiT family.

It carries out the reaction Co-precorrin-6B + S-adenosyl-L-methionine = Co-precorrin-7 + S-adenosyl-L-homocysteine + CO2. Its pathway is cofactor biosynthesis; adenosylcobalamin biosynthesis; cob(II)yrinate a,c-diamide from sirohydrochlorin (anaerobic route): step 8/10. Catalyzes the methylation of C-15 in cobalt-precorrin-6B followed by the decarboxylation of C-12 to form cobalt-precorrin-7. In Thermoplasma acidophilum (strain ATCC 25905 / DSM 1728 / JCM 9062 / NBRC 15155 / AMRC-C165), this protein is Probable cobalt-precorrin-6B C(15)-methyltransferase (decarboxylating).